The following is a 231-amino-acid chain: Ribosomal RNA small subunit methyltransferase G (231 aa).

S-adenosyl-L-methionine-binding positions include Gly-92, Leu-97, 143 to 144 (VE), and Arg-162.

The protein belongs to the methyltransferase superfamily. RNA methyltransferase RsmG family.

The protein resides in the cytoplasm. It catalyses the reaction guanosine(527) in 16S rRNA + S-adenosyl-L-methionine = N(7)-methylguanosine(527) in 16S rRNA + S-adenosyl-L-homocysteine. Its function is as follows. Specifically methylates the N7 position of guanine in position 527 of 16S rRNA. In Burkholderia thailandensis (strain ATCC 700388 / DSM 13276 / CCUG 48851 / CIP 106301 / E264), this protein is Ribosomal RNA small subunit methyltransferase G.